The sequence spans 516 residues: L-amino acid oxidase Lm29 (516 aa).

The signal sequence occupies residues Met-1–Cys-18. Cysteines 28 and 191 form a disulfide. FAD-binding positions include Met-61–Ser-62, Glu-81–Ala-82, Arg-89, and Gly-105–Arg-108. Arg-108 is a substrate binding site. Asn-190 carries N-linked (GlcNAc...) asparagine glycosylation. His-241 is a binding site for substrate. Val-279 lines the FAD pocket. Residues Cys-349 and Cys-430 are joined by a disulfide bond. A glycan (N-linked (GlcNAc...) asparagine) is linked at Asn-379. Tyr-390 is a substrate binding site. FAD-binding positions include Glu-475 and Gly-482–Thr-487. Gly-482–Trp-483 contacts substrate.

It belongs to the flavin monoamine oxidase family. FIG1 subfamily. Homodimer; non-covalently linked. Requires FAD as cofactor. Expressed by the venom gland.

Its subcellular location is the secreted. The catalysed reaction is an L-alpha-amino acid + O2 + H2O = a 2-oxocarboxylate + H2O2 + NH4(+). It catalyses the reaction L-leucine + O2 + H2O = 4-methyl-2-oxopentanoate + H2O2 + NH4(+). It carries out the reaction L-phenylalanine + O2 + H2O = 3-phenylpyruvate + H2O2 + NH4(+). The enzyme catalyses L-tryptophan + O2 + H2O = indole-3-pyruvate + H2O2 + NH4(+). The catalysed reaction is L-methionine + O2 + H2O = 4-methylsulfanyl-2-oxobutanoate + H2O2 + NH4(+). It catalyses the reaction L-isoleucine + O2 + H2O = (S)-3-methyl-2-oxopentanoate + H2O2 + NH4(+). It carries out the reaction L-tyrosine + O2 + H2O = 3-(4-hydroxyphenyl)pyruvate + H2O2 + NH4(+). Catalyzes an oxidative deamination of predominantly hydrophobic and aromatic L-amino acids, thus producing hydrogen peroxide that may contribute to the diverse toxic effects of this enzyme. Is highly active on L-Met=L-Leu&gt;&gt;L-Phe&gt;L-Trp&gt;L-Tyr&gt;L-Ile, and weakly or not active on L-His, L-Arg, L-Val, L-Gln, L-Thr, L-Lys, and L-Ser. Exhibits a low myotoxicity (a mild myonecrosis is observed after injection in mice quadriceps muscle). In vitro, is cytotoxic to a lot of human cell lines, including AGS (IC(50)=22.7 ug/ml), MCF-7 (IC(50)=1.4 ug/ml), HL-60, HeLa and Jurkat cells, as well as to the parasite Leishmania brasiliensis (IC(50)=2.22 ug/ml). This cytotoxicity is dependent on the production of hydrogen peroxyde, since it is inhibited by catalase, a hydrogen peroxyde scavenger. In Lachesis muta (South American bushmaster), this protein is L-amino acid oxidase Lm29.